Reading from the N-terminus, the 225-residue chain is NAD(P)H-quinone oxidoreductase subunit K, chloroplastic (225 aa).

Residues Cys43, Cys44, Cys108, and Cys139 each coordinate [4Fe-4S] cluster.

This sequence belongs to the complex I 20 kDa subunit family. As to quaternary structure, NDH is composed of at least 16 different subunits, 5 of which are encoded in the nucleus. [4Fe-4S] cluster is required as a cofactor.

It is found in the plastid. Its subcellular location is the chloroplast thylakoid membrane. The catalysed reaction is a plastoquinone + NADH + (n+1) H(+)(in) = a plastoquinol + NAD(+) + n H(+)(out). It carries out the reaction a plastoquinone + NADPH + (n+1) H(+)(in) = a plastoquinol + NADP(+) + n H(+)(out). NDH shuttles electrons from NAD(P)H:plastoquinone, via FMN and iron-sulfur (Fe-S) centers, to quinones in the photosynthetic chain and possibly in a chloroplast respiratory chain. The immediate electron acceptor for the enzyme in this species is believed to be plastoquinone. Couples the redox reaction to proton translocation, and thus conserves the redox energy in a proton gradient. The chain is NAD(P)H-quinone oxidoreductase subunit K, chloroplastic from Olimarabidopsis pumila (Dwarf rocket).